We begin with the raw amino-acid sequence, 404 residues long: Multidrug resistance protein MdtG (404 aa).

11 helical membrane passes run 19-39 (LGCF…PLYV), 56-76 (LVFS…GGLA), 90-110 (LGMA…QFLI), 113-133 (ALLG…ATQV), 144-164 (TLST…GLLA), 171-191 (PVFF…FFFI), 222-242 (LFVT…ILTL), 254-274 (IAFI…LSAP), 288-308 (ILIV…FVQT), 317-337 (FLLG…LVYN), and 376-396 (AVFC…WNSL).

It belongs to the major facilitator superfamily. DHA1 family. MdtG (TC 2.A.1.2.20) subfamily.

The protein localises to the cell inner membrane. The polypeptide is Multidrug resistance protein MdtG (Salmonella typhi).